Consider the following 127-residue polypeptide: Probable tautomerase YusQ (127 aa).

P2 (proton acceptor; via imino nitrogen) is an active-site residue.

It belongs to the 4-oxalocrotonate tautomerase family.

This Bacillus subtilis (strain 168) protein is Probable tautomerase YusQ (yusQ).